Here is a 135-residue protein sequence, read N- to C-terminus: Large ribosomal subunit protein uL16c (135 aa).

Belongs to the universal ribosomal protein uL16 family. Part of the 50S ribosomal subunit.

The protein resides in the plastid. Its subcellular location is the chloroplast. The protein is Large ribosomal subunit protein uL16c of Vitis vinifera (Grape).